Consider the following 450-residue polypeptide: Tubulin alpha-3 chain (450 aa).

Glutamine 11 contributes to the GTP binding site. Residue lysine 40 is modified to N6-acetyllysine. GTP-binding residues include glutamate 71, glycine 144, threonine 145, threonine 179, asparagine 206, and asparagine 228. Glutamate 71 serves as a coordination point for Mg(2+). The active site involves glutamate 254.

The protein belongs to the tubulin family. Dimer of alpha and beta chains. A typical microtubule is a hollow water-filled tube with an outer diameter of 25 nm and an inner diameter of 15 nM. Alpha-beta heterodimers associate head-to-tail to form protofilaments running lengthwise along the microtubule wall with the beta-tubulin subunit facing the microtubule plus end conferring a structural polarity. Microtubules usually have 13 protofilaments but different protofilament numbers can be found in some organisms and specialized cells. It depends on Mg(2+) as a cofactor. In terms of processing, undergoes a tyrosination/detyrosination cycle, the cyclic removal and re-addition of a C-terminal tyrosine residue by the enzymes tubulin tyrosine carboxypeptidase (TTCP) and tubulin tyrosine ligase (TTL), respectively. Post-translationally, acetylation of alpha chains at Lys-40 stabilizes microtubules and affects affinity and processivity of microtubule motors. This modification has a role in multiple cellular functions, ranging from cell motility, cell cycle progression or cell differentiation to intracellular trafficking and signaling.

It localises to the cytoplasm. The protein localises to the cytoskeleton. It catalyses the reaction GTP + H2O = GDP + phosphate + H(+). In terms of biological role, tubulin is the major constituent of microtubules, a cylinder consisting of laterally associated linear protofilaments composed of alpha- and beta-tubulin heterodimers. Microtubules grow by the addition of GTP-tubulin dimers to the microtubule end, where a stabilizing cap forms. Below the cap, tubulin dimers are in GDP-bound state, owing to GTPase activity of alpha-tubulin. The chain is Tubulin alpha-3 chain (TUBA3) from Zea mays (Maize).